The following is an 85-amino-acid chain: U4-theraphotoxin-Hhn1h (85 aa).

The N-terminal stretch at 1–22 (MKVTLIAILTCAAVLVLHTTAA) is a signal peptide. Residues 23-48 (EELEAESQLMEVGMPDTELAAVDEER) constitute a propeptide that is removed on maturation. Intrachain disulfides connect Cys-52-Cys-66, Cys-56-Cys-77, and Cys-71-Cys-82.

This sequence belongs to the neurotoxin 12 (Hwtx-2) family. 02 (Hwtx-2) subfamily. Expressed by the venom gland.

It is found in the secreted. Postsynaptic neurotoxin. This is U4-theraphotoxin-Hhn1h from Cyriopagopus hainanus (Chinese bird spider).